The sequence spans 394 residues: 3-dehydroquinate synthase (394 aa).

Residues 112-116 (GVIGD), 136-137 (TT), lysine 149, lysine 158, and 176-179 (TLAT) contribute to the NAD(+) site. Zn(2+) contacts are provided by glutamate 191, histidine 254, and histidine 276. The span at 371 to 388 (STNQHTTYSPHQHATTKP) shows a compositional bias: polar residues. The interval 371-394 (STNQHTTYSPHQHATTKPPNRRPH) is disordered.

This sequence belongs to the sugar phosphate cyclases superfamily. Dehydroquinate synthase family. Requires NAD(+) as cofactor. The cofactor is Co(2+). Zn(2+) serves as cofactor.

Its subcellular location is the cytoplasm. It catalyses the reaction 7-phospho-2-dehydro-3-deoxy-D-arabino-heptonate = 3-dehydroquinate + phosphate. It participates in metabolic intermediate biosynthesis; chorismate biosynthesis; chorismate from D-erythrose 4-phosphate and phosphoenolpyruvate: step 2/7. Functionally, catalyzes the conversion of 3-deoxy-D-arabino-heptulosonate 7-phosphate (DAHP) to dehydroquinate (DHQ). In Xylella fastidiosa (strain 9a5c), this protein is 3-dehydroquinate synthase.